The primary structure comprises 632 residues: ATP-dependent zinc metalloprotease FtsH (632 aa).

At 1-9 the chain is on the cytoplasmic side; it reads MKPTNEPKK. Residues 10 to 30 traverse the membrane as a helical segment; sequence PFFQSPIVLAVLGGILLIFFL. Topologically, residues 31 to 116 are periplasmic; it reads RSFNSDGSFS…INYSGFSESN (86 aa). A helical membrane pass occupies residues 117–137; the sequence is FFTDMLGWLMPILVILGLWMF. Over 138-632 the chain is Cytoplasmic; the sequence is MANRMQKNMG…RLIPLEEQAS (495 aa). An ATP-binding site is contributed by 210–217; the sequence is GPPGTGKT. Residue H434 coordinates Zn(2+). E435 is a catalytic residue. Zn(2+)-binding residues include H438 and D511.

This sequence in the central section; belongs to the AAA ATPase family. In the C-terminal section; belongs to the peptidase M41 family. As to quaternary structure, homohexamer. Zn(2+) serves as cofactor.

It is found in the cell inner membrane. Acts as a processive, ATP-dependent zinc metallopeptidase for both cytoplasmic and membrane proteins. Plays a role in the quality control of integral membrane proteins. In Helicobacter pylori (strain J99 / ATCC 700824) (Campylobacter pylori J99), this protein is ATP-dependent zinc metalloprotease FtsH.